The primary structure comprises 256 residues: Acetyl-coenzyme A carboxylase carboxyl transferase subunit alpha (256 aa).

One can recognise a CoA carboxyltransferase C-terminal domain in the interval 1 to 236 (MTDVARILKE…KLHLIDEITQ (236 aa)).

This sequence belongs to the AccA family. In terms of assembly, acetyl-CoA carboxylase is a heterohexamer composed of biotin carboxyl carrier protein (AccB), biotin carboxylase (AccC) and two subunits each of ACCase subunit alpha (AccA) and ACCase subunit beta (AccD).

The protein resides in the cytoplasm. The enzyme catalyses N(6)-carboxybiotinyl-L-lysyl-[protein] + acetyl-CoA = N(6)-biotinyl-L-lysyl-[protein] + malonyl-CoA. The protein operates within lipid metabolism; malonyl-CoA biosynthesis; malonyl-CoA from acetyl-CoA: step 1/1. Component of the acetyl coenzyme A carboxylase (ACC) complex. First, biotin carboxylase catalyzes the carboxylation of biotin on its carrier protein (BCCP) and then the CO(2) group is transferred by the carboxyltransferase to acetyl-CoA to form malonyl-CoA. This chain is Acetyl-coenzyme A carboxylase carboxyl transferase subunit alpha, found in Streptococcus equi subsp. zooepidemicus (strain H70).